Consider the following 73-residue polypeptide: Putative membrane protein insertion efficiency factor (73 aa).

This sequence belongs to the UPF0161 family.

Its subcellular location is the cell inner membrane. In terms of biological role, could be involved in insertion of integral membrane proteins into the membrane. The polypeptide is Putative membrane protein insertion efficiency factor (Rickettsia bellii (strain OSU 85-389)).